A 48-amino-acid chain; its full sequence is uncharacterized protein (48 aa).

A helical transmembrane segment spans residues 25–47 (TFASIGVTVGVQIVILLIWGLSW).

It is found in the membrane. This is an uncharacterized protein from Archaeoglobus fulgidus (strain ATCC 49558 / DSM 4304 / JCM 9628 / NBRC 100126 / VC-16).